Consider the following 361-residue polypeptide: MAVNGCMRLLRNGLTSACALEQSVRRLASGTLNVTVRDALNAALDEEIKRDDRVFLIGEEVAQYDGAYKISKGLWKKYGDGRIWDTPITEMAIAGLSVGAAMNGLRPICEFMSMNFSMQGIDHIINSAAKAHYMSAGRFHVPIVFRGANGAAVGVAQQHSQDFTAWFMHCPGVKVVVPYDCEDARGLLKAAVRDDNPVICLENEILYGMKFPVSPEAQSPDFVLPFGQAKIQRPGKDITIVSLSIGVDVSLHAADELAKSGIDCEVINLRCVRPLDFQTVKDSVIKTKHLVTVESGWPNCGVGAEISARVTESDAFGYLDGPILRVTGVDVPMPYAQPLETAALPQPADVVKMVKKCLNVQ.

The N-terminal 27 residues, 1–27, are a transit peptide targeting the mitochondrion; that stretch reads MAVNGCMRLLRNGLTSACALEQSVRRL. Glu90 serves as a coordination point for thiamine diphosphate. Residues Ile143, Ala191, Val192, Asp194, and Asn196 each contribute to the K(+) site.

As to quaternary structure, heterotetramer of two PDHA1 and two PDHB subunits. The heterotetramer interacts with DLAT, and is part of the multimeric pyruvate dehydrogenase complex that contains multiple copies of pyruvate dehydrogenase (E1), dihydrolipoamide acetyltransferase (DLAT, E2) and lipoamide dehydrogenase (DLD, E3). Requires thiamine diphosphate as cofactor.

The protein resides in the mitochondrion matrix. It carries out the reaction N(6)-[(R)-lipoyl]-L-lysyl-[protein] + pyruvate + H(+) = N(6)-[(R)-S(8)-acetyldihydrolipoyl]-L-lysyl-[protein] + CO2. In terms of biological role, the pyruvate dehydrogenase complex catalyzes the overall conversion of pyruvate to acetyl-CoA and CO(2), and thereby links the glycolytic pathway to the tricarboxylic cycle. This Ascaris suum (Pig roundworm) protein is Pyruvate dehydrogenase E1 component subunit beta, mitochondrial.